Consider the following 105-residue polypeptide: MPLSPGLLLLLLSGATATAALPLEGGPTGRDSEHMQEAAGIRKSSLLTFLAWWFEWTSQASAGPLIGEEAREVARRQEGAPPQQSARRDRMPCRNFFWKTFSSCK.

An N-terminal signal peptide occupies residues 1–18; it reads MPLSPGLLLLLLSGATAT. Residues 19-74 constitute a propeptide that is removed on maturation; sequence AALPLEGGPTGRDSEHMQEAAGIRKSSLLTFLAWWFEWTSQASAGPLIGEEAREVA. Cysteines 93 and 104 form a disulfide.

This sequence belongs to the somatostatin family. Expressed in a subset of GABAergic cells in the cortex and hippocampus.

It is found in the secreted. Functionally, binds to all human somatostatin receptor (SSTR) subtypes. It also inhibits cAMP production induced by forskolin through SSTRs. The protein is Cortistatin (CORT) of Homo sapiens (Human).